A 429-amino-acid chain; its full sequence is Histidinol dehydrogenase (429 aa).

Y130, Q191, and N214 together coordinate NAD(+). The substrate site is built by S237, Q259, and H262. Residues Q259 and H262 each contribute to the Zn(2+) site. Catalysis depends on proton acceptor residues E327 and H328. The substrate site is built by H328, D361, E415, and H420. D361 provides a ligand contact to Zn(2+). H420 provides a ligand contact to Zn(2+).

Belongs to the histidinol dehydrogenase family. The cofactor is Zn(2+).

It catalyses the reaction L-histidinol + 2 NAD(+) + H2O = L-histidine + 2 NADH + 3 H(+). Its pathway is amino-acid biosynthesis; L-histidine biosynthesis; L-histidine from 5-phospho-alpha-D-ribose 1-diphosphate: step 9/9. In terms of biological role, catalyzes the sequential NAD-dependent oxidations of L-histidinol to L-histidinaldehyde and then to L-histidine. The protein is Histidinol dehydrogenase of Neisseria meningitidis serogroup A / serotype 4A (strain DSM 15465 / Z2491).